The chain runs to 68 residues: Tabimmunregulin 1 (68 aa).

Residues 1-26 form the signal peptide; sequence MLLKSYVFFLLSLLIVGLFTSRDADA. The propeptide occupies 27-38; the sequence is QYEDLVTGYLRK.

In terms of tissue distribution, expressed in salivary glands.

The protein localises to the secreted. Horsefly salivary gland immunosuppressant protein that likely inhibits the host inflammatory response by regulation of anti- and pro-inflammatory cytokines. When tested on mouse splenocytes in the presence of LPS, it increases the secretion of the proinflammatory cytokine interleukin-10 (IL10) and decreases the secretion of the proinflammatory cytokine interferon-gamma (IFNG) in a dose-dependent manner. In Tabanus yao (Horsefly), this protein is Tabimmunregulin 1.